The following is a 252-amino-acid chain: Indole-3-glycerol phosphate synthase (252 aa).

Belongs to the TrpC family.

It catalyses the reaction 1-(2-carboxyphenylamino)-1-deoxy-D-ribulose 5-phosphate + H(+) = (1S,2R)-1-C-(indol-3-yl)glycerol 3-phosphate + CO2 + H2O. It functions in the pathway amino-acid biosynthesis; L-tryptophan biosynthesis; L-tryptophan from chorismate: step 4/5. This Listeria monocytogenes serotype 4a (strain HCC23) protein is Indole-3-glycerol phosphate synthase.